The chain runs to 335 residues: UPF0353 protein MAP_3435c (335 aa).

2 helical membrane-spanning segments follow: residues 18-38 and 67-87; these read WFFLALLAVLLVIGLYVVQQF and VPTILLATSLVLLTTAMAGPT. A VWFA domain is found at 98-294; that stretch reads VVMLVIDVSE…DSLKNVYSTL (197 aa). Residues 309–329 traverse the membrane as a helical segment; the sequence is MAWMLLGAVVLAGAVLAGLLL.

It belongs to the UPF0353 family.

It localises to the cell membrane. In Mycolicibacterium paratuberculosis (strain ATCC BAA-968 / K-10) (Mycobacterium paratuberculosis), this protein is UPF0353 protein MAP_3435c.